Reading from the N-terminus, the 1183-residue chain is LRR receptor-like serine/threonine-protein kinase FLS2 (1183 aa).

The signal sequence occupies residues 1 to 41 (MERNKFASKMSQHYTKTICIAVVLVAVLFSLSSAAAAGSGA). Over 42-809 (AVSVQLEALL…GKKRVFSRTG (768 aa)) the chain is Extracellular. The cysteines at positions 87 and 94 are disulfide-linked. Asn-88 and Asn-120 each carry an N-linked (GlcNAc...) asparagine glycan. LRR repeat units follow at residues 97 to 120 (AGQV…FLGN), 121 to 145 (ISTL…LGRL), 147 to 169 (ELEQ…LCNC), 171 to 193 (AMWA…IGDL), 194 to 217 (SNLE…MAKL), 218 to 241 (KGIM…IGDL), 242 to 265 (SNLQ…LGRC), 267 to 289 (NLTL…LGEL), 290 to 313 (TNLE…LRRC), 315 to 337 (SLLN…LGEL), 338 to 361 (PSLQ…LTNL), 363 to 385 (NLTI…IGSL), and 386 to 409 (RNLR…ISNC). A disulfide bridge connects residues Cys-167 and Cys-189. 2 N-linked (GlcNAc...) asparagine glycosylation sites follow: Asn-168 and Asn-181. An N-linked (GlcNAc...) asparagine glycan is attached at Asn-267. 4 N-linked (GlcNAc...) asparagine glycosylation sites follow: Asn-363, Asn-395, Asn-408, and Asn-414. LRR repeat units follow at residues 433-457 (LQSL…LFDC), 459-480 (QLQK…LVGQ), 481-505 (LGNL…IGNM), 507-529 (KLIS…ISNM), 530-553 (SSLQ…VFEL), 555-577 (QLTI…VANL), 578-600 (RSLS…ALGR), 601-625 (LDQL…VIAS), 627-651 (SNVQ…IGGL), 652-675 (VMVQ…LAGC), 676-699 (KNLY…LFPQ), 701-724 (DLLT…IAAL), 725-748 (KHIQ…LANL), and 749-773 (TALR…VFRN). 3 N-linked (GlcNAc...) asparagine glycosylation sites follow: Asn-483, Asn-504, and Asn-528. Asn-591 is a glycosylation site (N-linked (GlcNAc...) asparagine). N-linked (GlcNAc...) asparagine glycosylation is present at Asn-634. N-linked (GlcNAc...) asparagine glycans are attached at residues Asn-707, Asn-747, Asn-755, and Asn-773. A helical membrane pass occupies residues 810-830 (LVILVVLIALSTLLLLMVATI). The Cytoplasmic portion of the chain corresponds to 831–1183 (LLVSYRRYRR…LKMSKLVGED (353 aa)). Residues 876–1179 (FDQGNVIGSS…LSSLLKMSKL (304 aa)) enclose the Protein kinase domain. Residues 882–890 (IGSSNLSTV) and Lys-908 contribute to the ATP site. Catalysis depends on Asp-1013, which acts as the Proton acceptor.

It belongs to the protein kinase superfamily. Ser/Thr protein kinase family. As to quaternary structure, interacts with SERK2.

Its subcellular location is the cell membrane. It carries out the reaction L-seryl-[protein] + ATP = O-phospho-L-seryl-[protein] + ADP + H(+). The catalysed reaction is L-threonyl-[protein] + ATP = O-phospho-L-threonyl-[protein] + ADP + H(+). Constitutes the pattern-recognition receptor (PPR) that determines the specific perception of flagellin (flg22), a potent elicitor of the defense response to pathogen-associated molecular patterns (PAMPs). Recognizes flg22 from Pseudomonas aeruginosa and Acidovorax avenae. flg22 is a peptide derived from the bacterial flagellin N-terminus sequence. Does not recognize flg22 from Xanthomonas oryzae pv. oryzae (Xoo) or Xanthomonas oryzae pv. oryzicola (Xoc). This chain is LRR receptor-like serine/threonine-protein kinase FLS2, found in Oryza sativa subsp. japonica (Rice).